We begin with the raw amino-acid sequence, 134 residues long: RxLR effector protein 4 (134 aa).

A signal peptide spans M1 to A22. Positions A43 to Q65 are disordered. The span at D48–D58 shows a compositional bias: basic and acidic residues. Residues R52–R71 carry the RxLR-dEER motif.

The protein belongs to the RxLR effector family.

The protein localises to the secreted. In terms of biological role, effector that enhances plant susceptibility to P.parasitica in Nicotiana benthamiana and Arabidopsis thaliana. Triggers non-specific cell death in a variety of plants, including tobacco, tomato, potato and A.thaliana. E4-induced cell death is dependent on HSP90, NPK and SGT1, suggesting that PpE4 is recognized by the plant immune system. This is RxLR effector protein 4 from Phytophthora nicotianae (strain INRA-310) (Phytophthora parasitica).